The chain runs to 459 residues: Exodeoxyribonuclease 7 large subunit (459 aa).

Belongs to the XseA family. In terms of assembly, heterooligomer composed of large and small subunits.

The protein resides in the cytoplasm. The enzyme catalyses Exonucleolytic cleavage in either 5'- to 3'- or 3'- to 5'-direction to yield nucleoside 5'-phosphates.. Bidirectionally degrades single-stranded DNA into large acid-insoluble oligonucleotides, which are then degraded further into small acid-soluble oligonucleotides. In Pseudomonas fluorescens (strain ATCC BAA-477 / NRRL B-23932 / Pf-5), this protein is Exodeoxyribonuclease 7 large subunit.